The primary structure comprises 450 residues: Pancreatic triacylglycerol lipase (450 aa).

3 disulfides stabilise this stretch: C4–C10, C91–C102, and C91–C104. S153 acts as the Nucleophile in catalysis. N-linked (GlcNAc...) asparagine glycosylation occurs at N167. The active-site Charge relay system is the D177. Residues E188, R191, D193, and D196 each coordinate Ca(2+). A disulfide bridge links C238 with C262. The active-site Charge relay system is the H264. 3 disulfide bridges follow: C286–C297, C300–C305, and C434–C450. The PLAT domain occupies 339–450; that stretch reads WRYKVSVTLS…EEVLLTLNPC (112 aa).

This sequence belongs to the AB hydrolase superfamily. Lipase family. In terms of assembly, forms a 1:1 stoichiometric complex with (pro)colipase/CLPS.

The protein localises to the secreted. It carries out the reaction a triacylglycerol + H2O = a diacylglycerol + a fatty acid + H(+). It catalyses the reaction 1,2,3-tributanoylglycerol + H2O = dibutanoylglycerol + butanoate + H(+). The catalysed reaction is 1,2,3-tri-(9Z-octadecenoyl)-glycerol + H2O = di-(9Z)-octadecenoylglycerol + (9Z)-octadecenoate + H(+). The enzyme catalyses all-trans-retinyl hexadecanoate + H2O = all-trans-retinol + hexadecanoate + H(+). It carries out the reaction 1,2-di-(9Z-octadecenoyl)-glycerol + H2O = (9Z-octadecenoyl)-glycerol + (9Z)-octadecenoate + H(+). Inhibited by bile salts, is reactivated by (pro)colipase/CLPS. Its function is as follows. Plays an important role in fat metabolism. It preferentially splits the esters of long-chain fatty acids at positions 1 and 3, producing mainly 2-monoacylglycerol and free fatty acids, and shows considerably higher activity against insoluble emulsified substrates than against soluble ones. The chain is Pancreatic triacylglycerol lipase (PNLIP) from Sus scrofa (Pig).